The primary structure comprises 508 residues: Cytochrome P450 monooxygenase orf4 (508 aa).

C447 is a heme binding site.

It belongs to the cytochrome P450 family. Heme serves as cofactor.

It participates in mycotoxin biosynthesis. Functionally, cytochrome P450 monooxygenase; part of the gene cluster that mediates the biosynthesis of brefeldin A (BFA), a protein transport inhibitor that shows antiviral, antifungal, and antitumor properties. The proposed biosynthesis of BFA involves formation of an acyclic polyketide chain that is differentially tailored throughout the backbone. The highly reducing polyketide synthase Bref-PKS is proposed to synthesize the precisely reduced octaketide precursor, which could then be directly offloaded by the thiohydrolase enzyme Bref-TH followed by a cytochrome P450 monooxygenase-mediated formation of the cyclopentane ring and macrocyclization to afford 7-deoxy BFA. Alternatively, the first ring annulation can also occur on the ACP-tethered intermediate before the thiohydrolase release and lactonization. The C7-hydroxylation by another cytochrome P450 monooxygenase is believed to be the final step in the process to obtain the final structure of BFA. In addition to the HRPKS Bref-PKS and the thiohydrolase Bref-TH, the brefeldin A biosynthesis cluster contains 4 cytochrome p450 monooxygenases (called orf3 to orf6), as well a the probable cluster-specific transcription regulator orf8. The protein is Cytochrome P450 monooxygenase orf4 of Eupenicillium brefeldianum (Penicillium brefeldianum).